The chain runs to 368 residues: Histidinol-phosphate aminotransferase (368 aa).

An N6-(pyridoxal phosphate)lysine modification is found at Lys215.

This sequence belongs to the class-II pyridoxal-phosphate-dependent aminotransferase family. Histidinol-phosphate aminotransferase subfamily. Homodimer. Requires pyridoxal 5'-phosphate as cofactor.

It catalyses the reaction L-histidinol phosphate + 2-oxoglutarate = 3-(imidazol-4-yl)-2-oxopropyl phosphate + L-glutamate. The protein operates within amino-acid biosynthesis; L-histidine biosynthesis; L-histidine from 5-phospho-alpha-D-ribose 1-diphosphate: step 7/9. This chain is Histidinol-phosphate aminotransferase (hisC), found in Buchnera aphidicola subsp. Acyrthosiphon pisum (strain APS) (Acyrthosiphon pisum symbiotic bacterium).